Consider the following 155-residue polypeptide: uncharacterized protein (155 aa).

The N-acetyltransferase domain maps to 6–155 (TCVRNARLAD…CDEIAMVKTL (150 aa)).

This sequence belongs to the acetyltransferase family.

This is an uncharacterized protein from Chlorobaculum tepidum (strain ATCC 49652 / DSM 12025 / NBRC 103806 / TLS) (Chlorobium tepidum).